The primary structure comprises 155 residues: Large ribosomal subunit protein uL15 (155 aa).

The segment covering 1–16 (MVRRFKRAVKYRRGSR) has biased composition (basic residues). A disordered region spans residues 1–35 (MVRRFKRAVKYRRGSRTHGWGRVGQHRKSGGSGGK).

This sequence belongs to the universal ribosomal protein uL15 family. Part of the 50S ribosomal subunit.

Its function is as follows. Binds to the 23S rRNA. The chain is Large ribosomal subunit protein uL15 from Pyrobaculum arsenaticum (strain DSM 13514 / JCM 11321 / PZ6).